A 211-amino-acid polypeptide reads, in one-letter code: Outer-membrane lipoprotein carrier protein (211 aa).

Residues M1–A24 form the signal peptide.

Belongs to the LolA family. As to quaternary structure, monomer.

The protein resides in the periplasm. Its function is as follows. Participates in the translocation of lipoproteins from the inner membrane to the outer membrane. Only forms a complex with a lipoprotein if the residue after the N-terminal Cys is not an aspartate (The Asp acts as a targeting signal to indicate that the lipoprotein should stay in the inner membrane). This chain is Outer-membrane lipoprotein carrier protein, found in Cupriavidus necator (strain ATCC 17699 / DSM 428 / KCTC 22496 / NCIMB 10442 / H16 / Stanier 337) (Ralstonia eutropha).